A 62-amino-acid chain; its full sequence is MKFFGILLIVTMVVLVMIATTYVESISIGIKCSPSIDLCEGQCRIRKYFTGYCSGDTCHCSG.

Positions 1 to 25 (MKFFGILLIVTMVVLVMIATTYVES) are cleaved as a signal peptide. Intrachain disulfides connect Cys-32-Cys-53, Cys-39-Cys-58, and Cys-43-Cys-60.

In terms of tissue distribution, expressed by the venom gland.

Its subcellular location is the secreted. Functionally, neurotoxin. Decreases the action potential of myelinated nerves in mice and frogs. This is Venom protein 51.1 from Lychas mucronatus (Chinese swimming scorpion).